We begin with the raw amino-acid sequence, 551 residues long: Probable terpene synthase 8 (551 aa).

Positions 307, 311, and 457 each coordinate Mg(2+). Positions 307 to 311 (DDTYD) match the DDXXD motif motif.

Belongs to the terpene synthase family. Requires Mg(2+) as cofactor.

Probable sesquiterpene synthase. This is Probable terpene synthase 8 (TPS8) from Ricinus communis (Castor bean).